Consider the following 330-residue polypeptide: ATP-dependent (S)-NAD(P)H-hydrate dehydratase (330 aa).

A YjeF C-terminal domain is found at 36–327 (VIPLVRNTIP…QEINSAFKKL (292 aa)). (6S)-NADPHX is bound by residues Gly-136 and 189 to 195 (NFMEFTR). ATP contacts are provided by residues 229–233 (KGEED) and 248–257 (GSGRRCGGQG). Asp-258 contributes to the (6S)-NADPHX binding site.

Belongs to the NnrD/CARKD family. The cofactor is Mg(2+).

It catalyses the reaction (6S)-NADHX + ATP = ADP + phosphate + NADH + H(+). The enzyme catalyses (6S)-NADPHX + ATP = ADP + phosphate + NADPH + H(+). Catalyzes the dehydration of the S-form of NAD(P)HX at the expense of ATP, which is converted to ADP. Together with NAD(P)HX epimerase, which catalyzes the epimerization of the S- and R-forms, the enzyme allows the repair of both epimers of NAD(P)HX, a damaged form of NAD(P)H that is a result of enzymatic or heat-dependent hydration. The sequence is that of ATP-dependent (S)-NAD(P)H-hydrate dehydratase from Danio rerio (Zebrafish).